The sequence spans 2371 residues: Highly reducing polyketide synthase ntnH (2371 aa).

Residues 10 to 429 (PSPIAIVGIG…GANAHVILEG (420 aa)) form the Ketosynthase family 3 (KS3) domain. Residues Cys-180, His-316, and His-352 each act as for beta-ketoacyl synthase activity in the active site. Residues 528-796 (FIFTGQGAQW…NSCLSRGADA (269 aa)) are malonyl-CoA:ACP transacylase (MAT) domain. Residues 858–986 (HELLGARVIG…GKVHPGNAST (129 aa)) form an N-terminal hotdog fold region. Residues 858 to 1142 (HELLGARVIG…GIRFRILENN (285 aa)) form a dehydratase (DH) domain region. The PKS/mFAS DH domain occupies 858–1145 (HELLGARVIG…FRILENNRSK (288 aa)). The Proton acceptor; for dehydratase activity role is filled by His-890. The C-terminal hotdog fold stretch occupies residues 1001–1145 (VRGVISAKWY…FRILENNRSK (145 aa)). The active-site Proton donor; for dehydratase activity is Asp-1059. The interval 1309 to 1456 (FFQLLGHNKK…FENVTAIMDQ (148 aa)) is methyltransferase (CMet) domain. The enoyl reductase (ER) (ER) domain stretch occupies residues 1669–1968 (GLLSSLQWQG…GHRPIGAICI (300 aa)). The interval 1993 to 2167 (SYVLIGGLGG…ASVIDLGVME (175 aa)) is ketoreductase (KR) domain. In terms of domain architecture, Carrier spans 2280 to 2362 (EDETAVAEFL…DLGKLARSRI (83 aa)). O-(pantetheine 4'-phosphoryl)serine is present on Ser-2322.

It functions in the pathway secondary metabolite biosynthesis; terpenoid biosynthesis. In terms of biological role, highly reducing polyketide synthase; part of the gene cluster that mediates the biosynthesis of the meroterpenoids nectripenoids A and B, as well as cochliquninone D and isocochliquninone E. The pathway probably begins with the HR-PKS ntnH that catalyzes two chain-extension steps to form a reduced triketide, which then primes the SAT domain in the NR-PKS ntnG to initiate three more cycles of extension to give a linear hexaketide corresponding to the polyketide part of nectripenoids. The FAD-dependent monooxygenase ntnJ then performs an oxidative decarboxylation at C11 of the ntnH/ntnG product, via an electrophilic aromatic hydroxylation with concomitant ipso-decarboxylation. The membrane-bound polyprenyl transferase ntnF then introduces a farnesyl group before the FAD-dependent monooxygenase ntnK functions as the first epoxidase on terminal C12'-C13' olefin, followed by a second epoxidation on C7'-C8' catalyzed by ntnA. The terpene cyclase/mutase ntnI then initiates the sequential tricyclic ring formation through protonation of the terminal epoxide and catalyzes the regioselective and stereoselective 6/6/6-tricyclic ring formation. The cytochrome P450 monooxygenase ntnM may then hydroxylate C1'. This chain is Highly reducing polyketide synthase ntnH, found in Nectria sp.